Reading from the N-terminus, the 152-residue chain is Protein FERTILITY RESTORER RF2, mitochondrial (152 aa).

The N-terminal 52 residues, 1–52 (MSTLVTCSLPGAVTTHASTRRFGGSQFQTSQASCISFKREVSAKAVLRSVRC), are a transit peptide targeting the mitochondrion. Residues 52–69 (CNATQTQSAQRKSSTATV) show a composition bias toward polar residues. The disordered stretch occupies residues 52–101 (CNATQTQSAQRKSSTATVKRSDPKGKTQGPKLDDGSGGFPPFRFGKGGGG).

The protein localises to the mitochondrion. In terms of biological role, non-functional allele of the RF2 fertility restorer of rice varieties with LD-type cytoplasmic male sterility (CMS). Non-functional RF2 alleles are found in japonica cultivars Taichung 65 and Nipponbare (AC F1SZ44), and is due to the presence of Thr-78 which replaces Ile-78 in the functional allele. Functional allele is found in the japonica cultivars Fukuyama and Owarihatamochi (AC F1SZ42), and indica cultivar Kasalath (AC F1SZ41). This is Protein FERTILITY RESTORER RF2, mitochondrial from Oryza sativa subsp. japonica (Rice).